We begin with the raw amino-acid sequence, 139 residues long: Holo-[acyl-carrier-protein] synthase (139 aa).

2 residues coordinate Mg(2+): aspartate 8 and glutamate 57.

The protein belongs to the P-Pant transferase superfamily. AcpS family. Mg(2+) is required as a cofactor.

It localises to the cytoplasm. It carries out the reaction apo-[ACP] + CoA = holo-[ACP] + adenosine 3',5'-bisphosphate + H(+). Transfers the 4'-phosphopantetheine moiety from coenzyme A to a Ser of acyl-carrier-protein. The sequence is that of Holo-[acyl-carrier-protein] synthase from Sinorhizobium fredii (strain NBRC 101917 / NGR234).